Consider the following 100-residue polypeptide: HssA/B-like protein 37 (100 aa).

Disordered regions lie at residues M1–S29 and R67–I100. The span at S71–C93 shows a compositional bias: gly residues.

The protein belongs to the hssA/B family.

The chain is HssA/B-like protein 37 (hssl37) from Dictyostelium discoideum (Social amoeba).